The chain runs to 189 residues: Probable nicotinate-nucleotide adenylyltransferase (189 aa).

It belongs to the NadD family.

The enzyme catalyses nicotinate beta-D-ribonucleotide + ATP + H(+) = deamido-NAD(+) + diphosphate. Its pathway is cofactor biosynthesis; NAD(+) biosynthesis; deamido-NAD(+) from nicotinate D-ribonucleotide: step 1/1. Functionally, catalyzes the reversible adenylation of nicotinate mononucleotide (NaMN) to nicotinic acid adenine dinucleotide (NaAD). In Bacillus cereus (strain B4264), this protein is Probable nicotinate-nucleotide adenylyltransferase.